The chain runs to 31 residues: Delta-actitoxin-Dar1b (31 aa).

It belongs to the sea anemone short toxin (type III) family. In terms of processing, contains 4 disulfide bonds.

The protein localises to the secreted. It localises to the nematocyst. Its function is as follows. Binds specifically to voltage-gated sodium channels (Nav), thereby delaying their inactivation during signal transduction. This chain is Delta-actitoxin-Dar1b, found in Dofleinia armata (Armed anemone).